Here is a 112-residue protein sequence, read N- to C-terminus: Small ribosomal subunit protein bS6 (112 aa).

Belongs to the bacterial ribosomal protein bS6 family.

Binds together with bS18 to 16S ribosomal RNA. The polypeptide is Small ribosomal subunit protein bS6 (Chlamydia trachomatis serovar L2 (strain ATCC VR-902B / DSM 19102 / 434/Bu)).